Here is a 612-residue protein sequence, read N- to C-terminus: Glutamine--fructose-6-phosphate aminotransferase [isomerizing] (612 aa).

Cysteine 2 serves as the catalytic Nucleophile; for GATase activity. One can recognise a Glutamine amidotransferase type-2 domain in the interval 2–220 (CGIVGAIRAH…DGDIALLASD (219 aa)). 2 consecutive SIS domains span residues 288–428 (AKSV…VRGL) and 461–602 (WAQQ…VDKP). The active-site For Fru-6P isomerization activity is the lysine 607.

In terms of assembly, homodimer.

The protein resides in the cytoplasm. It carries out the reaction D-fructose 6-phosphate + L-glutamine = D-glucosamine 6-phosphate + L-glutamate. Functionally, catalyzes the first step in hexosamine metabolism, converting fructose-6P into glucosamine-6P using glutamine as a nitrogen source. In Neisseria meningitidis serogroup A / serotype 4A (strain DSM 15465 / Z2491), this protein is Glutamine--fructose-6-phosphate aminotransferase [isomerizing].